Consider the following 338-residue polypeptide: Mas-related G-protein coupled receptor member B2 (338 aa).

At methionine 1 to methionine 40 the chain is on the extracellular side. 3 N-linked (GlcNAc...) asparagine glycosylation sites follow: asparagine 9, asparagine 18, and asparagine 23. The chain crosses the membrane as a helical span at residues isoleucine 41–phenylalanine 61. Residues leucine 62–glutamine 89 lie on the Cytoplasmic side of the membrane. Residues phenylalanine 90 to leucine 110 form a helical membrane-spanning segment. Residue valine 111 is a topological domain, extracellular. Residues leucine 112–isoleucine 132 form a helical membrane-spanning segment. At glutamate 133–cysteine 157 the chain is on the cytoplasmic side. The chain crosses the membrane as a helical span at residues phenylalanine 158–leucine 178. The Extracellular segment spans residues phenylalanine 179–aspartate 191. A helical transmembrane segment spans residues valine 192 to leucine 212. Residues leucine 213 to threonine 231 are Cytoplasmic-facing. Residues isoleucine 232–leucine 252 form a helical membrane-spanning segment. The Extracellular segment spans residues tyrosine 253–tyrosine 268. Residues leucine 269 to valine 289 traverse the membrane as a helical segment. At glycine 290 to serine 338 the chain is on the cytoplasmic side. Residues methionine 310 to serine 338 are disordered.

This sequence belongs to the G-protein coupled receptor 1 family. Mas subfamily. As to expression, mast cell-specific.

The protein resides in the cell membrane. Mast cell-specific receptor for basic secretagogues, i.e. cationic amphiphilic drugs, as well as endo- or exogenous peptides, consisting of a basic head group and a hydrophobic core. Recognizes and binds small molecules containing a cyclized tetrahydroisoquinoline (THIQ), such as non-steroidal neuromuscular blocking drugs (NMBDs), including tubocurarine and atracurium. In response to these compounds, mediates pseudo-allergic reactions characterized by histamine release, inflammation and airway contraction. The chain is Mas-related G-protein coupled receptor member B2 (Mrgprb2) from Mus musculus (Mouse).